A 192-amino-acid polypeptide reads, in one-letter code: Virion infectivity factor (192 aa).

An interaction with host APOBEC3F; F1-box region spans residues 14 to 17 (DRMR). The segment at 40–44 (YRHHF) is interaction with host APOBEC3G; G-box. The interaction with host APOBEC3F and APOBEC3G; FG-box stretch occupies residues 54–72 (EVHIPLETAELVITTYWGL). Residues 74–79 (PGEREW) are interaction with host APOBEC3F; F2-box. Positions 75 to 114 (GEREWHLGQGVSIEWRQGRYRTQIDPGLADQLIHIYYFDC) are RNA-binding. The residue at position 96 (Thr96) is a Phosphothreonine; by host MAP4K1. Zn(2+)-binding residues include His108, Cys114, Cys133, and His139. Positions 108 to 139 (HIYYFDCFSESAIRKAILGHKISPRCNYQAGH) match the HCCH motif motif. Ser144 is subject to Phosphoserine; by host. Residues 144 to 153 (SLQYLALTAL) carry the BC-box-like motif motif. Residues 151–164 (TALIAPKKTKPPLP) are multimerization. Residues 151-180 (TALIAPKKTKPPLPSVQKLVEDRWNKPQKT) are SOCS box-like. Residues 164–192 (PSVQKLVEDRWNKPQKTRGHRESHTMNGH) form a disordered region. Ser165 carries the phosphoserine; by host MAP4K1 modification. Positions 171–172 (ED) are membrane association. The segment covering 183-192 (HRESHTMNGH) has biased composition (basic and acidic residues). Position 188 is a phosphothreonine; by host (Thr188).

It belongs to the primate lentivirus group Vif protein family. Homomultimer; in vitro and presumably in vivo. Interacts with viral RNA and Pr55Gag precursor; these interactions mediate Vif incorporation into the virion. Interacts with the viral reverse transcriptase. Forms cullin-5-RING E3 ubiquitin-protein ligase complex (ECS complex) by interacting with host CUL5, RBX2, elongin BC complex (ELOB and ELOC) and CBFB/CBF-beta. Within the ECS complex, Vif interacts directly with host CUL5, ELOC and APOBEC (APOBEC3F and APOBEC3G) substrates. The ECS complex also contains some single-stranded RNA (ssRNA) that acts as a glue that bridges Vif with APOBEC (APOBEC3F and APOBEC3G) substrates. Interacts with host UBCE7IP1 isoform 3/ZIN and possibly with SAT. Interacts with host tyrosine kinases HCK and FYN; these interactions may decrease level of phosphorylated APOBEC3G incorporation into virions. Interacts with host ABCE1; this interaction may play a role in protecting viral RNA from damage during viral assembly. Interacts with host MDM2; this interaction targets Vif for degradation by the proteasome. In terms of processing, processed in virion by the viral protease. Post-translationally, highly phosphorylated on serine and threonine residues. Polyubiquitinated and degraded by the proteasome in the presence of APOBEC3G.

The protein localises to the host cytoplasm. The protein resides in the host cell membrane. It localises to the virion. In terms of biological role, counteracts the innate antiviral activity of host APOBEC3F and APOBEC3G by promoting their ubiquitination and degradation. Acts as a substrate recognition component of an E3 ubiquitin-protein ligase complex: mechanistically, Vif hijacks a host cullin-5-RING E3 ubiquitin-protein ligase complex (ECS complex) and the transcription coactivator CBFB/CBF-beta to form an active E3 ubiquitin-protein ligase complex that targets APOBEC3G and APOBEC3F for polyubiquitination, leading to their degradation by the proteasome. Vif interaction with APOBEC3G also blocks its cytidine deaminase activity in a proteasome-independent manner, suggesting a dual inhibitory mechanism. May interact directly with APOBEC3G mRNA in order to inhibit its translation. Association with CBFB/CBF-beta also inhibits the transcription coactivator activity of CBFB/CBF-beta. Seems to play a role in viral morphology by affecting the stability of the viral nucleoprotein core. Finally, Vif also contributes to the G2 cell cycle arrest observed in HIV infected cells. The protein is Virion infectivity factor of Homo sapiens (Human).